A 399-amino-acid polypeptide reads, in one-letter code: 1-deoxy-D-xylulose 5-phosphate reductoisomerase (399 aa).

Residues Thr-10, Gly-11, Ser-12, Ile-13, and Asn-124 each coordinate NADPH. Lys-125 provides a ligand contact to 1-deoxy-D-xylulose 5-phosphate. Glu-126 contacts NADPH. Asp-150 is a binding site for Mn(2+). Residues Ser-151, Glu-152, Ser-186, and His-209 each coordinate 1-deoxy-D-xylulose 5-phosphate. Glu-152 contacts Mn(2+). Residue Gly-215 participates in NADPH binding. The 1-deoxy-D-xylulose 5-phosphate site is built by Ser-222, Asn-227, Lys-228, and Glu-231. Glu-231 contributes to the Mn(2+) binding site.

It belongs to the DXR family. Requires Mg(2+) as cofactor. It depends on Mn(2+) as a cofactor.

It catalyses the reaction 2-C-methyl-D-erythritol 4-phosphate + NADP(+) = 1-deoxy-D-xylulose 5-phosphate + NADPH + H(+). Its pathway is isoprenoid biosynthesis; isopentenyl diphosphate biosynthesis via DXP pathway; isopentenyl diphosphate from 1-deoxy-D-xylulose 5-phosphate: step 1/6. Catalyzes the NADPH-dependent rearrangement and reduction of 1-deoxy-D-xylulose-5-phosphate (DXP) to 2-C-methyl-D-erythritol 4-phosphate (MEP). The sequence is that of 1-deoxy-D-xylulose 5-phosphate reductoisomerase from Psychromonas ingrahamii (strain DSM 17664 / CCUG 51855 / 37).